Consider the following 337-residue polypeptide: Lipoyl synthase (337 aa).

Residues cysteine 81, cysteine 86, cysteine 92, cysteine 107, cysteine 111, cysteine 114, and serine 323 each coordinate [4Fe-4S] cluster. A Radical SAM core domain is found at 93-312 (FSHGTATFMI…EEYGNALGFS (220 aa)).

This sequence belongs to the radical SAM superfamily. Lipoyl synthase family. Requires [4Fe-4S] cluster as cofactor.

It localises to the cytoplasm. It catalyses the reaction [[Fe-S] cluster scaffold protein carrying a second [4Fe-4S](2+) cluster] + N(6)-octanoyl-L-lysyl-[protein] + 2 oxidized [2Fe-2S]-[ferredoxin] + 2 S-adenosyl-L-methionine + 4 H(+) = [[Fe-S] cluster scaffold protein] + N(6)-[(R)-dihydrolipoyl]-L-lysyl-[protein] + 4 Fe(3+) + 2 hydrogen sulfide + 2 5'-deoxyadenosine + 2 L-methionine + 2 reduced [2Fe-2S]-[ferredoxin]. It functions in the pathway protein modification; protein lipoylation via endogenous pathway; protein N(6)-(lipoyl)lysine from octanoyl-[acyl-carrier-protein]: step 2/2. Functionally, catalyzes the radical-mediated insertion of two sulfur atoms into the C-6 and C-8 positions of the octanoyl moiety bound to the lipoyl domains of lipoate-dependent enzymes, thereby converting the octanoylated domains into lipoylated derivatives. The sequence is that of Lipoyl synthase from Xanthomonas oryzae pv. oryzae (strain MAFF 311018).